The primary structure comprises 185 residues: CASP-like protein SELMODRAFT_413556 (185 aa).

At 1–89 the chain is on the cytoplasmic side; that stretch reads MATLPLSLIF…AVTVLFYLAK (89 aa). The helical transmembrane segment at 90–110 threads the bilayer; the sequence is LVFGILGLALSIIWLLHIIVF. The Extracellular portion of the chain corresponds to 111 to 131; sequence MLVNPPAFPFLNQVFIQLDSA. The chain crosses the membrane as a helical span at residues 132 to 152; the sequence is WGLLGTTAFAIFCYYLIMSVI. The Cytoplasmic segment spans residues 153–163; sequence SGEMHSIHPMK. A helical transmembrane segment spans residues 164–184; the sequence is YQGTLMNSFLFNVAIILLCST. Position 185 (R185) is a topological domain, extracellular.

It belongs to the Casparian strip membrane proteins (CASP) family. As to quaternary structure, homodimer and heterodimers.

The protein resides in the cell membrane. The polypeptide is CASP-like protein SELMODRAFT_413556 (Selaginella moellendorffii (Spikemoss)).